The primary structure comprises 394 residues: Phosphoglycerate kinase (394 aa).

Substrate-binding positions include 21–23 (DFN), Arg36, 59–62 (HLGR), Arg118, and Arg151. Ser183 is subject to Phosphoserine. Positions 201 and 292 each coordinate ATP. Thr299 is modified (phosphothreonine). ATP is bound by residues Glu323 and 350–353 (GGDS).

It belongs to the phosphoglycerate kinase family. Monomer.

It localises to the cytoplasm. The enzyme catalyses (2R)-3-phosphoglycerate + ATP = (2R)-3-phospho-glyceroyl phosphate + ADP. It functions in the pathway carbohydrate degradation; glycolysis; pyruvate from D-glyceraldehyde 3-phosphate: step 2/5. This chain is Phosphoglycerate kinase, found in Bacillus cereus (strain ZK / E33L).